The primary structure comprises 308 residues: Porphobilinogen deaminase (308 aa).

Cysteine 241 carries the S-(dipyrrolylmethanemethyl)cysteine modification.

The protein belongs to the HMBS family. In terms of assembly, monomer. Dipyrromethane serves as cofactor.

The catalysed reaction is 4 porphobilinogen + H2O = hydroxymethylbilane + 4 NH4(+). It functions in the pathway porphyrin-containing compound metabolism; protoporphyrin-IX biosynthesis; coproporphyrinogen-III from 5-aminolevulinate: step 2/4. In terms of biological role, tetrapolymerization of the monopyrrole PBG into the hydroxymethylbilane pre-uroporphyrinogen in several discrete steps. The chain is Porphobilinogen deaminase from Staphylococcus aureus (strain Newman).